Here is a 351-residue protein sequence, read N- to C-terminus: Dihydroorotate dehydrogenase (quinone) (351 aa).

FMN contacts are provided by residues 61–65 (AGLDK) and Thr85. A substrate-binding site is contributed by Lys65. 110 to 114 (NRMGF) lines the substrate pocket. Residues Asn139 and Asn172 each contribute to the FMN site. Asn172 is a binding site for substrate. Ser175 acts as the Nucleophile in catalysis. Asn177 is a substrate binding site. Positions 217 and 245 each coordinate FMN. 246-247 (NT) serves as a coordination point for substrate. FMN contacts are provided by residues Gly268, Gly297, and 318–319 (YS).

It belongs to the dihydroorotate dehydrogenase family. Type 2 subfamily. Monomer. FMN serves as cofactor.

The protein resides in the cell membrane. The enzyme catalyses (S)-dihydroorotate + a quinone = orotate + a quinol. It participates in pyrimidine metabolism; UMP biosynthesis via de novo pathway; orotate from (S)-dihydroorotate (quinone route): step 1/1. In terms of biological role, catalyzes the conversion of dihydroorotate to orotate with quinone as electron acceptor. This is Dihydroorotate dehydrogenase (quinone) from Stenotrophomonas maltophilia (strain K279a).